A 2715-amino-acid chain; its full sequence is Chromodomain-helicase-DNA-binding protein 6 (2715 aa).

Positions 1–11 (MKMKIQKKEKQ) are enriched in basic and acidic residues. Disordered regions lie at residues 1–30 (MKMK…SVNF) and 66–244 (EEAA…QVKR). The segment at 1 to 747 (MKMKIQKKEK…MMELRKCCNH (747 aa)) is required for DNA-dependent ATPase activity. The span at 12–27 (LSNLKVLNHSPMSDAS) shows a compositional bias: polar residues. A compositionally biased stretch (basic and acidic residues) spans 123-172 (EPKEPKEPRKAKEPKKAKEHKEPKQKDGAKKARKPREASGTKEAKEKRSC). Chromo domains follow at residues 292-343 (NIIE…KDPR) and 375-439 (VEVD…KHVE). A Helicase ATP-binding domain is found at 473–647 (LFNWYNRKNC…FSLLNFLEPS (175 aa)). ATP is bound at residue 486 to 493 (DEMGLGKT). Positions 598–601 (DEAH) match the DEAH box motif. The 170-residue stretch at 787-956 (LIDKLLPKLI…LSKMEVEDLL (170 aa)) folds into the Helicase C-terminal domain. The tract at residues 1318 to 1390 (KSLSAEQGVT…SDPDKSPWPV (73 aa)) is disordered. A compositionally biased stretch (polar residues) spans 1321–1330 (SAEQGVTDGT). Composition is skewed to basic and acidic residues over residues 1333-1351 (IPER…KVDG) and 1367-1376 (FSEKKDDSRA). The region spanning 1449–1503 (RWTRREQADFYRTVSSFGVVYDQEKKTFDWTQFRIISRLDKKSDESLEQYFYSFV) is the Myb-like domain. Residues 2027–2038 (FENKDDYDRDGN) show a composition bias toward basic and acidic residues. 6 disordered regions span residues 2027 to 2063 (FENK…ITGD), 2116 to 2148 (SQQY…AAEH), 2321 to 2351 (QATL…QAEK), 2373 to 2422 (PGFG…FLPE), 2547 to 2602 (TSTA…PAIT), and 2648 to 2715 (VGLE…NDTN). Residues 2116-2141 (SQQYEPSGTLPTPVLTSSAGSRTSLS) are compositionally biased toward polar residues. Over residues 2329–2346 (PEGPGPATSAPEPATAAS) the composition is skewed to low complexity. Positions 2547–2560 (TSTAPASLSSTTKS) are enriched in low complexity. Basic and acidic residues-rich tracts occupy residues 2567 to 2588 (KTAE…EDKP) and 2706 to 2715 (ALKDSNNDTN).

It belongs to the SNF2/RAD54 helicase family. In terms of assembly, interacts with NFE2L2; involved in activation of the transcription. As to quaternary structure, (Microbial infection) Interacts with the influenza A polymerase complex composed fo PB1, PB2 and PA. (Microbial infection) Interacts (via N-terminus) with human papillomavirus protein E8^E2C (via C-terminus); this interaction induces transcriptional repression of the viral genome. As to expression, widely expressed.

Its subcellular location is the nucleus. The protein resides in the nucleoplasm. The enzyme catalyses ATP + H2O = ADP + phosphate + H(+). Its function is as follows. ATP-dependent chromatin-remodeling factor. Regulates transcription by disrupting nucleosomes in a largely non-sliding manner which strongly increases the accessibility of chromatin; nucleosome disruption requires ATP. Activates transcription of specific genes in response to oxidative stress through interaction with NFE2L2. In terms of biological role, (Microbial infection) Acts as a transcriptional repressor of different viruses including influenza virus or papillomavirus. During influenza virus infection, the viral polymerase complex localizes CHD6 to inactive chromatin where it gets degraded in a proteasome independent-manner. In Homo sapiens (Human), this protein is Chromodomain-helicase-DNA-binding protein 6 (CHD6).